A 363-amino-acid chain; its full sequence is FMNH(2)-dependent dimethylsulfone monooxygenase (363 aa).

Belongs to the SsuD family.

The enzyme catalyses dimethyl sulfone + FMNH2 + O2 = methanesulfinate + FMN + formaldehyde + H2O + 2 H(+). Its function is as follows. Involved in the dimethyl sulfide degradation pathway. Catalyzes the oxidation of dimethylsulfone (DMSO2) to yield methanesulfinate, which is oxidized spontaneously to methanesulfonate in the presence of dioxygen and FMNH(2). This is FMNH(2)-dependent dimethylsulfone monooxygenase from Pseudomonas putida (Arthrobacter siderocapsulatus).